Here is a 417-residue protein sequence, read N- to C-terminus: Calreticulin (417 aa).

Residues 1-17 (MLLSVPLLLGLLGLAVA) form the signal peptide. Positions 18–197 (EPAVYFKEQF…NSQVESGSLE (180 aa)) are N-domain. Residue Q26 participates in Ca(2+) binding. K48 bears the N6-acetyllysine mark. Ca(2+) contacts are provided by K62 and K64. K64 carries the post-translational modification N6-(2-hydroxyisobutyryl)lysine. C105 and C137 form a disulfide bridge. An alpha-D-glucoside is bound by residues Y109, K111, Y128, and D135. Residue K159 is modified to N6-acetyllysine. One copy of the 1-1 repeat lies at 191 to 202 (VESGSLEDDWDF). The 4 X approximate repeats stretch occupies residues 191–255 (VESGSLEDDW…DAKKPEDWDE (65 aa)). The segment at 193–278 (SGSLEDDWDF…PEYKGEWKPR (86 aa)) is disordered. Residues 198-308 (DDWDFLPPKK…YSPDPSIYAY (111 aa)) form a P-domain region. A compositionally biased stretch (basic and acidic residues) spans 207–251 (KIKDPDASKPEDWDERAKIDDPTDSKPEDWDKPEHIPDPDAKKPE). An N6-acetyllysine modification is found at K209. Repeat copies occupy residues 210-221 (DPDASKPEDWDE), 227-238 (DPTDSKPEDWDK), 244-255 (DPDAKKPEDWDE), 259-269 (GEWEPPVIQNP), 273-283 (GEWKPRQIDNP), and 287-297 (GTWIHPEIDNP). The interval 237-270 (DKPEHIPDPDAKKPEDWDEEMDGEWEPPVIQNPE) is interaction with PPIB. The span at 252 to 261 (DWDEEMDGEW) shows a compositional bias: acidic residues. The 3 X approximate repeats stretch occupies residues 259–297 (GEWEPPVIQNPEYKGEWKPRQIDNPDYKGTWIHPEIDNP). A C-domain region spans residues 309–417 (DNFGVLGLDL…DVPGQAKDEL (109 aa)). D317 contributes to the an alpha-D-glucoside binding site. D328 lines the Ca(2+) pocket. N-linked (GlcNAc...) asparagine glycosylation occurs at N344. A disordered region spans residues 350 to 417 (TKAAEKQMKD…DVPGQAKDEL (68 aa)). Residues 352-379 (AAEKQMKDKQDEEQRLKEEEEDKKRKEE) are compositionally biased toward basic and acidic residues. Over residues 380-409 (EEAEDKEDDEDKDEDEEDEEDKEEDEEEDV) the composition is skewed to acidic residues. The short motif at 414–417 (KDEL) is the Prevents secretion from ER element.

This sequence belongs to the calreticulin family. In terms of assembly, monomer. Component of an EIF2 complex at least composed of CELF1/CUGBP1, CALR, CALR3, EIF2S1, EIF2S2, HSP90B1 and HSPA5. Interacts with PDIA3/ERp57 and SPACA9. Interacts with TRIM21. Interacts with NR3C1. Interacts with PPIB. Interacts (via P-domain) with PDIA5. Interacts with GABARAP. Interacts with HLA-E-B2M and HLA-G-B2M complexes. Interacts with HLA-F. Interacts with CLCC1.

It is found in the endoplasmic reticulum lumen. Its subcellular location is the cytoplasm. It localises to the cytosol. The protein resides in the secreted. The protein localises to the extracellular space. It is found in the extracellular matrix. Its subcellular location is the cell surface. It localises to the sarcoplasmic reticulum lumen. The protein resides in the cytoplasmic vesicle. The protein localises to the secretory vesicle. It is found in the cortical granule. Its subcellular location is the cytolytic granule. In terms of biological role, calcium-binding chaperone that promotes folding, oligomeric assembly and quality control in the endoplasmic reticulum (ER) via the calreticulin/calnexin cycle. This lectin interacts transiently with almost all of the monoglucosylated glycoproteins that are synthesized in the ER. Interacts with the DNA-binding domain of NR3C1 and mediates its nuclear export. Involved in maternal gene expression regulation. May participate in oocyte maturation via the regulation of calcium homeostasis. Present in the cortical granules of non-activated oocytes, is exocytosed during the cortical reaction in response to oocyte activation and might participate in the block to polyspermy. This chain is Calreticulin, found in Homo sapiens (Human).